We begin with the raw amino-acid sequence, 3432 residues long: Genome polyprotein (3432 aa).

An interaction with host EXOC1 region spans residues 2 to 15; the sequence is TKKPGGPGKNRAIN. Residues 2–109 are Cytoplasmic-facing; the sequence is TKKPGGPGKN…RKQNKRGGNE (108 aa). Residues 37-72 form a hydrophobic; homodimerization of capsid protein C region; that stretch reads LLDGRGPVRFVLALITFFKFTALAPTKALLGRWKAV. The propeptide at 106–127 is ER anchor for the capsid protein C, removed in mature form by serine protease NS3; that stretch reads GGNEGSIMWLASLAVVIAYAGA. A helical membrane pass occupies residues 110 to 130; that stretch reads GSIMWLASLAVVIAYAGAMKL. Residues 131–253 are Extracellular-facing; sequence SNFQGKLLMT…ATRYLMKTEN (123 aa). Asn142 is a glycosylation site (N-linked (GlcNAc...) asparagine; by host). A helical membrane pass occupies residues 254–274; it reads WIIRNPGYAFLAATLGWMLGS. At 275-279 the chain is on the cytoplasmic side; it reads NNGQR. Residues 280 to 294 traverse the membrane as a helical segment; the sequence is VVFTILLLLVAPAYS. The Extracellular segment spans residues 295–746; the sequence is FNCLGMGNRD…QVFGGAFRTL (452 aa). 6 disulfide bridges follow: Cys297–Cys324, Cys354–Cys410, Cys354–Cys415, Cys368–Cys399, Cys386–Cys410, and Cys386–Cys415. The interval 392–405 is fusion peptide; it reads DRGWGNGCGLFGKG. N-linked (GlcNAc...) asparagine; by host glycosylation occurs at Asn448. Cystine bridges form between Cys484–Cys581 and Cys598–Cys629. A helical transmembrane segment spans residues 747-767; sequence FGGMSWITQGLMGALLLWMGV. Topologically, residues 768–773 are cytoplasmic; sequence NARDRS. Residues 774-794 form a helical membrane-spanning segment; that stretch reads IALAFLATGGVLVFLATNVHA. The Extracellular portion of the chain corresponds to 795-1219; sequence DTGCAIDITR…AFAEANSGGD (425 aa). 6 disulfide bridges follow: Cys798–Cys809, Cys849–Cys937, Cys973–Cys1017, Cys1074–Cys1123, Cys1085–Cys1106, and Cys1107–Cys1110. N-linked (GlcNAc...) asparagine; by host glycosylation is found at Asn924 and Asn1001. A helical transmembrane segment spans residues 1220 to 1240; the sequence is VLHLALIAVFKIQPAFLVMNM. Residues 1241–1250 are Cytoplasmic-facing; it reads LSTRWTNQEN. Residues 1251–1271 form a helical membrane-spanning segment; that stretch reads VVLVLGAALFQLASVDLQIGV. Residue His1272 is a topological domain, lumenal. Residues 1273–1293 traverse the membrane as a helical segment; the sequence is GILNAAAIAWMIVRAITFPTT. At 1294-1309 the chain is on the cytoplasmic side; it reads SSVTMPVLALLTPGMR. Residues 1310–1330 form a helical membrane-spanning segment; that stretch reads ALYLDTYRIILLVIGICSLLQ. Over 1331–1341 the chain is Lumenal; the sequence is ERKKTMAKKKG. A helical membrane pass occupies residues 1342–1362; the sequence is AVLLGLALTSTGWFSPTTIAA. Topologically, residues 1363–1374 are cytoplasmic; sequence GLMVCNPNKKRG. A helical membrane pass occupies residues 1375–1395; sequence WPATEFLSAVGLMFAIVGGLA. Residues 1396 to 1398 are Lumenal-facing; it reads ELD. A helical transmembrane segment spans residues 1399-1419; that stretch reads IESMSIPFMLAGLMAVSYVVS. The Cytoplasmic portion of the chain corresponds to 1420–1476; sequence GKATDMWLERAADISWEMDAAITGSSRRLDVKLDDDGDFHLIDDPGVPWKVWVLRMS. The segment at 1427–1466 is interacts with and activates NS3 protease; that stretch reads LERAADISWEMDAAITGSSRRLDVKLDDDGDFHLIDDPGV. Residues 1477–1497 constitute an intramembrane region (helical); sequence CIGLAALTPWAIVPAAFGYWL. The Cytoplasmic portion of the chain corresponds to 1498–2173; the sequence is TLKTTKRGGV…RMALEELPDA (676 aa). In terms of domain architecture, Peptidase S7 spans 1505–1682; sequence GGVFWDTPSP…DRQEEPVPEA (178 aa). Residues His1555, Asp1579, and Ser1639 each act as charge relay system; for serine protease NS3 activity in the active site. The Helicase ATP-binding domain occupies 1685 to 1841; the sequence is PNMLRKRQMT…DSNAPIHDLQ (157 aa). Residues 1689–1692 form an important for RNA-binding region; that stretch reads RKRQ. Residue 1698–1705 coordinates ATP; that stretch reads LHPGSGKT. The DEAH box signature appears at 1789–1792; sequence DEAH. A Helicase C-terminal domain is found at 1852 to 2017; sequence GYEWITEYAG…GLVAQLYGPE (166 aa). Lys1893 is modified (N6-acetyllysine; by host). The segment at 1950–1971 is disordered; that stretch reads NPSPITSASAAQRRGRVGRNPN. Positions 2168-2172 are regulates the ATPase activity of NS3 helicase; it reads EELPD. The helical transmembrane segment at 2174–2194 threads the bilayer; that stretch reads LETITLIVAITVMTGGFFLLM. Residues 2195-2199 lie on the Lumenal side of the membrane; it reads MQRKG. The helical intramembrane region spans 2200–2220; that stretch reads IGKMGLGALVLTLATFFLWAA. Residue Glu2221 is a topological domain, lumenal. The helical transmembrane segment at 2222 to 2242 threads the bilayer; that stretch reads VPGTKIAGTLLIALLLMVVLI. Residues 2243–2257 are Cytoplasmic-facing; that stretch reads PEPEKQRSQTDNQLA. The helical transmembrane segment at 2258–2278 threads the bilayer; that stretch reads VFLICVLTVVGVVAANEYGML. The Lumenal portion of the chain corresponds to 2279-2311; it reads EKTKADLKSMFVGKTQASGLTGLPSMALDLRPA. The segment at residues 2312–2332 is an intramembrane region (helical); it reads TAWALYGGSTVVLTPLLKHLI. Topologically, residues 2333-2368 are lumenal; sequence TSEYVTTSLASINSQAGSLFVLPRGVPFTDLDLTVG. The chain crosses the membrane as a helical span at residues 2369–2389; that stretch reads LVFLGCWGQITLTTFLTAMVL. Topologically, residues 2390–2444 are cytoplasmic; the sequence is ATLHYGYMLPGWQAEALRAAQRRTAAGIMKNAVVDGMVATDVPELERTTPLMQKK. The helical transmembrane segment at 2445–2465 threads the bilayer; that stretch reads VGQVLLIGVSVAAFLVNPNVT. Over 2466–2469 the chain is Lumenal; sequence TVRE. The chain crosses the membrane as a helical span at residues 2470–2490; sequence AGVLVTAATLTLWDNGASAVW. Residues 2491–3432 lie on the Cytoplasmic side of the membrane; it reads NSTTATGLCH…DVLIQEDRVI (942 aa). The mRNA cap 0-1 NS5-type MT domain occupies 2528 to 2793; sequence GRPGGRTLGE…DVNLGSGTRA (266 aa). Residue Ser2583 participates in S-adenosyl-L-methionine binding. Ser2583 carries the phosphoserine modification. Catalysis depends on Lys2588, which acts as the For 2'-O-MTase activity. Gly2613, Trp2614, Thr2631, Lys2632, Asp2658, and Val2659 together coordinate S-adenosyl-L-methionine. Asp2673 acts as the For 2'-O-MTase activity in catalysis. Ile2674 serves as a coordination point for S-adenosyl-L-methionine. Catalysis depends on for 2'-O-MTase activity residues Lys2709 and Glu2745. Tyr2747 serves as a coordination point for S-adenosyl-L-methionine. Zn(2+) is bound by residues Glu2967, His2971, Cys2976, and Cys2979. Residues 3057–3209 enclose the RdRp catalytic domain; the sequence is GKMYADDTAG…KPLDDRFATA (153 aa). Residues His3244, Cys3260, and Cys3379 each contribute to the Zn(2+) site.

It in the N-terminal section; belongs to the class I-like SAM-binding methyltransferase superfamily. mRNA cap 0-1 NS5-type methyltransferase family. In terms of assembly, homodimer. Interacts (via N-terminus) with host EXOC1 (via C-terminus); this interaction results in EXOC1 degradation through the proteasome degradation pathway. Forms heterodimers with envelope protein E in the endoplasmic reticulum and Golgi. As to quaternary structure, homodimer; in the endoplasmic reticulum and Golgi. Interacts with protein prM. Interacts with non-structural protein 1. Interacts with host HSPA5. In terms of assembly, homodimer; Homohexamer when secreted. Interacts with envelope protein E. NS1 interacts with NS4B. Interacts with host complement protein CFH; this interaction leads to the degradation of C3. Interacts (via N-terminus) with serine protease NS3. As to quaternary structure, forms a heterodimer with serine protease NS3. May form homooligomers. In terms of assembly, forms a heterodimer with NS2B. Interacts with non-structural protein 2A (via N-terminus). Interacts with NS4B. Interacts with unphosphorylated RNA-directed RNA polymerase NS5; this interaction stimulates RNA-directed RNA polymerase NS5 guanylyltransferase activity. Interacts with host ILF2. Interacts with serine protease NS3. As to quaternary structure, homodimer. Interacts with host STAT2; this interaction inhibits the phosphorylation of the latter, and, when all viral proteins are present (polyprotein), targets STAT2 for degradation. Interacts with serine protease NS3. The cofactor is Mn(2+). It depends on Mg(2+) as a cofactor. Post-translationally, specific enzymatic cleavages in vivo yield mature proteins. Cleavages in the lumen of endoplasmic reticulum are performed by host signal peptidase, whereas cleavages in the cytoplasmic side are performed by serine protease NS3. Signal cleavage at the 2K-4B site requires a prior NS3 protease-mediated cleavage at the 4A-2K site. In terms of processing, cleaved in post-Golgi vesicles by a host furin, releasing the mature small envelope protein M, and peptide pr. This cleavage is incomplete as up to 30% of viral particles still carry uncleaved prM. N-glycosylated. Post-translationally, N-glycosylated. The excreted form is glycosylated and this is required for efficient secretion of the protein from infected cells. In terms of processing, acetylated by host KAT5. Acetylation modulates NS3 RNA-binding and unwinding activities and plays an important positive role for viral replication. Phosphorylated on serines residues. This phosphorylation may trigger NS5 nuclear localization.

Its subcellular location is the virion. The protein resides in the host nucleus. The protein localises to the host cytoplasm. It localises to the host perinuclear region. It is found in the secreted. Its subcellular location is the virion membrane. The protein resides in the host endoplasmic reticulum membrane. The protein localises to the host cell surface. It carries out the reaction Selective hydrolysis of -Xaa-Xaa-|-Yaa- bonds in which each of the Xaa can be either Arg or Lys and Yaa can be either Ser or Ala.. The catalysed reaction is RNA(n) + a ribonucleoside 5'-triphosphate = RNA(n+1) + diphosphate. It catalyses the reaction a ribonucleoside 5'-triphosphate + H2O = a ribonucleoside 5'-diphosphate + phosphate + H(+). The enzyme catalyses ATP + H2O = ADP + phosphate + H(+). It carries out the reaction a 5'-end (5'-triphosphoguanosine)-ribonucleoside in mRNA + S-adenosyl-L-methionine = a 5'-end (N(7)-methyl 5'-triphosphoguanosine)-ribonucleoside in mRNA + S-adenosyl-L-homocysteine. The catalysed reaction is a 5'-end (N(7)-methyl 5'-triphosphoguanosine)-ribonucleoside in mRNA + S-adenosyl-L-methionine = a 5'-end (N(7)-methyl 5'-triphosphoguanosine)-(2'-O-methyl-ribonucleoside) in mRNA + S-adenosyl-L-homocysteine + H(+). Its function is as follows. Plays a role in virus budding by binding to the cell membrane and gathering the viral RNA into a nucleocapsid that forms the core of a mature virus particle. During virus entry, may induce genome penetration into the host cytoplasm after hemifusion induced by the surface proteins. Can migrate to the cell nucleus where it modulates host functions. Overcomes the anti-viral effects of host EXOC1 by sequestering and degrading the latter through the proteasome degradation pathway. In terms of biological role, inhibits RNA silencing by interfering with host Dicer. Functionally, prevents premature fusion activity of envelope proteins in trans-Golgi by binding to envelope protein E at pH 6.0. After virion release in extracellular space, gets dissociated from E dimers. Acts as a chaperone for envelope protein E during intracellular virion assembly by masking and inactivating envelope protein E fusion peptide. prM is the only viral peptide matured by host furin in the trans-Golgi network probably to avoid catastrophic activation of the viral fusion activity in acidic Golgi compartment prior to virion release. prM-E cleavage is inefficient, and many virions are only partially matured. These uncleaved prM would play a role in immune evasion. Its function is as follows. May play a role in virus budding. Exerts cytotoxic effects by activating a mitochondrial apoptotic pathway through M ectodomain. May display a viroporin activity. In terms of biological role, binds to host cell surface receptor and mediates fusion between viral and cellular membranes. Efficient virus attachment to cell is, at least in part, mediated by host HSPA5. Envelope protein is synthesized in the endoplasmic reticulum in the form of heterodimer with protein prM. They play a role in virion budding in the ER, and the newly formed immature particle is covered with 60 spikes composed of heterodimer between precursor prM and envelope protein E. The virion is transported to the Golgi apparatus where the low pH causes dissociation of PrM-E heterodimers and formation of E homodimers. prM-E cleavage is inefficient, and many virions are only partially matured. These uncleaved prM would play a role in immune evasion. Functionally, involved in immune evasion, pathogenesis and viral replication. Once cleaved off the polyprotein, is targeted to three destinations: the viral replication cycle, the plasma membrane and the extracellular compartment. Essential for viral replication. Required for formation of the replication complex and recruitment of other non-structural proteins to the ER-derived membrane structures. Excreted as a hexameric lipoparticle that plays a role against host immune response. Antagonizing the complement function. Binds to the host macrophages and dendritic cells. Inhibits signal transduction originating from Toll-like receptor 3 (TLR3). Component of the viral RNA replication complex that functions in virion assembly and antagonizes the host alpha/beta interferon antiviral response. Its function is as follows. Required cofactor for the serine protease function of NS3. May have membrane-destabilizing activity and form viroporins. In terms of biological role, displays three enzymatic activities: serine protease, NTPase and RNA helicase. NS3 serine protease, in association with NS2B, performs its autocleavage and cleaves the polyprotein at dibasic sites in the cytoplasm: C-prM, NS2A-NS2B, NS2B-NS3, NS3-NS4A, NS4A-2K and NS4B-NS5. NS3 RNA helicase binds RNA and unwinds dsRNA in the 3' to 5' direction. Functionally, regulates the ATPase activity of the NS3 helicase activity. NS4A allows NS3 helicase to conserve energy during unwinding. Functions as a signal peptide for NS4B and is required for the interferon antagonism activity of the latter. Its function is as follows. Induces the formation of ER-derived membrane vesicles where the viral replication takes place. Inhibits interferon (IFN)-induced host STAT1 phosphorylation and nuclear translocation, thereby preventing the establishment of cellular antiviral state by blocking the IFN-alpha/beta pathway. Inhibits STAT2 translocation in the nucleus after IFN-alpha treatment. In terms of biological role, replicates the viral (+) and (-) RNA genome, and performs the capping of genomes in the cytoplasm. NS5 methylates viral RNA cap at guanine N-7 and ribose 2'-O positions. Besides its role in RNA genome replication, also prevents the establishment of cellular antiviral state by blocking the interferon-alpha/beta (IFN-alpha/beta) signaling pathway. Inhibits host TYK2 and STAT2 phosphorylation, thereby preventing activation of JAK-STAT signaling pathway. In Ardeidae (herons), this protein is Genome polyprotein.